A 410-amino-acid polypeptide reads, in one-letter code: Protein TIC 214 (410 aa).

A run of 6 helical transmembrane segments spans residues 22–42, 61–81, 87–107, 131–151, 161–181, and 210–230; these read FVFG…GSFI, GSAI…IGVI, LEPS…IGFL, AVIV…ITSI, LFLF…GFLI, and LALC…YIGL.

It belongs to the TIC214 family. Part of the Tic complex.

The protein resides in the plastid. It is found in the chloroplast inner membrane. Functionally, involved in protein precursor import into chloroplasts. May be part of an intermediate translocation complex acting as a protein-conducting channel at the inner envelope. In Mesostigma viride (Green alga), this protein is Protein TIC 214.